Consider the following 707-residue polypeptide: Elongation factor G (707 aa).

The region spanning 8–288 (QFTRNIGIMA…AVCKFLPSPA (281 aa)) is the tr-type G domain. GTP is bound by residues 17–24 (AHIDAGKT), 85–89 (DTPGH), and 139–142 (NKMD). Residues 288–308 (ADTPTVEGTDPSDPNKVIERK) are disordered.

This sequence belongs to the TRAFAC class translation factor GTPase superfamily. Classic translation factor GTPase family. EF-G/EF-2 subfamily.

It is found in the cytoplasm. Functionally, catalyzes the GTP-dependent ribosomal translocation step during translation elongation. During this step, the ribosome changes from the pre-translocational (PRE) to the post-translocational (POST) state as the newly formed A-site-bound peptidyl-tRNA and P-site-bound deacylated tRNA move to the P and E sites, respectively. Catalyzes the coordinated movement of the two tRNA molecules, the mRNA and conformational changes in the ribosome. This Porphyromonas gingivalis (strain ATCC 33277 / DSM 20709 / CIP 103683 / JCM 12257 / NCTC 11834 / 2561) protein is Elongation factor G.